The sequence spans 536 residues: Pre-mRNA-splicing factor SLU7-B (536 aa).

The disordered stretch occupies residues 1 to 42 (MATASVAFKSREDHRKKLELEEARKAGLAPAEVDEDGKEINP). The span at 9 to 25 (KSREDHRKKLELEEARK) shows a compositional bias: basic and acidic residues. A CCHC-type zinc finger spans residues 96–109 (CINCGAMTHSSKAC). Disordered regions lie at residues 176-201 (LKKL…DLDD) and 488-507 (KEDL…YNVN). Residues 187–200 (NGDDATSDGEEDLD) are compositionally biased toward acidic residues. At S193 the chain carries Phosphoserine. The Nuclear localization signal motif lies at 486-493 (LKKEDLSR). The span at 488 to 501 (KEDLSRREEKDERK) shows a compositional bias: basic and acidic residues.

The protein belongs to the SLU7 family. In terms of assembly, interacts with PHYB in photobodies under red light.

It is found in the nucleus. Its function is as follows. Participates in the second catalytic step of pre-mRNA splicing, when the free hydroxyl group of exon I attacks the 3'-splice site to generate spliced mRNA and the excised lariat intron. Splicing factor acting as a negative regulator of seedling photomorphogenesis by antagonizing PHYB signaling to promote light-induced hypocotyl elongation. Prevents the accumulation of functionally spliced RVE8a form, a circadian clock regulator mediating the transcriptional activation of clock genes containing evening elements (EE), but promotes PIF4 expression to fine-tune hypocotyl elongation in the light. Together with SMP1, involved in the timing of cell cycle arrest during leaf development, in a STRUWWELPETER (SWP) dependent manner; promotes cell proliferation in developing organs. The chain is Pre-mRNA-splicing factor SLU7-B from Arabidopsis thaliana (Mouse-ear cress).